A 144-amino-acid polypeptide reads, in one-letter code: MSKERTRCREKVLEFLFQKDLGQEIEVDFSDFSPQGQVFAYKLYDGALYYKDLADEIISKFSKNWKLERIGTIEKNILRMAIAEMFTFSDIPQGVTVNEAVELAKKYVSPEAGRFINGILRNIVRNWDEVKKLKEGFVDVTSEN.

Belongs to the NusB family.

Functionally, involved in transcription antitermination. Required for transcription of ribosomal RNA (rRNA) genes. Binds specifically to the boxA antiterminator sequence of the ribosomal RNA (rrn) operons. This Dictyoglomus turgidum (strain DSM 6724 / Z-1310) protein is Transcription antitermination protein NusB.